The primary structure comprises 689 residues: Translation initiation factor IF-2 (689 aa).

The disordered stretch occupies residues 41–109 (DYERVFGGGN…EAPAAEEREA (69 aa)). Basic residues predominate over residues 61 to 70 (RKGRQKKRRR). The segment covering 80–94 (RGPRAAAPSRPSRGR) has biased composition (low complexity). Basic and acidic residues predominate over residues 96–109 (AAREEAPAAEEREA). Positions 192-361 (EKPPVITVMG…LVVAELEELR (170 aa)) constitute a tr-type G domain. The G1 stretch occupies residues 201-208 (GHVDHGKT). 201–208 (GHVDHGKT) contributes to the GTP binding site. The interval 226–230 (GITQH) is G2. Residues 247–250 (DTPG) are G3. GTP is bound by residues 247–251 (DTPGH) and 301–304 (NKID). The segment at 301-304 (NKID) is G4. Positions 337–339 (SAK) are G5.

It belongs to the TRAFAC class translation factor GTPase superfamily. Classic translation factor GTPase family. IF-2 subfamily.

Its subcellular location is the cytoplasm. Its function is as follows. One of the essential components for the initiation of protein synthesis. Protects formylmethionyl-tRNA from spontaneous hydrolysis and promotes its binding to the 30S ribosomal subunits. Also involved in the hydrolysis of GTP during the formation of the 70S ribosomal complex. In Rubrobacter xylanophilus (strain DSM 9941 / JCM 11954 / NBRC 16129 / PRD-1), this protein is Translation initiation factor IF-2.